The following is a 336-amino-acid chain: Cytoskeleton protein RodZ (336 aa).

The Cytoplasmic portion of the chain corresponds to 1 to 111 (MNTEATHDQN…LGKRRKKRDG (111 aa)). Residues 19 to 71 (LRNAREQLGLSQQAVAERLCLKVSTVRDIEEDKAPADLASTFLRGYIRSYARL) enclose the HTH cro/C1-type domain. A DNA-binding region (H-T-H motif) is located at residues 30-49 (QQAVAERLCLKVSTVRDIEE). A helical; Signal-anchor for type II membrane protein membrane pass occupies residues 112–132 (WLMTFTWLVLFVVIGLSGAWW). Topologically, residues 133–336 (WQDHKAQQEE…TLNAEQSPAQ (204 aa)) are periplasmic. Over residues 148 to 164 (DQSSAELNNNQSQSVPL) the composition is skewed to polar residues. The tract at residues 148–245 (DQSSAELNNN…PLPTDQAGVT (98 aa)) is disordered. Residues 165–201 (DTSTTTDQAMATTPTSPVDTTATNTQTPAATTAPSPT) are compositionally biased toward low complexity. Polar residues predominate over residues 202-217 (VDSQQNAVVPPSQANV). Low complexity predominate over residues 218–240 (DTAATPAPAATTTPDGAAPLPTD).

Belongs to the RodZ family.

Its subcellular location is the cell inner membrane. Cytoskeletal protein that is involved in cell-shape control through regulation of the length of the long axis. This is Cytoskeleton protein RodZ from Escherichia coli O7:K1 (strain IAI39 / ExPEC).